The sequence spans 116 residues: Large ribosomal subunit protein bL17 (116 aa).

This sequence belongs to the bacterial ribosomal protein bL17 family. Part of the 50S ribosomal subunit. Contacts protein L32.

The sequence is that of Large ribosomal subunit protein bL17 from Synechococcus sp. (strain WH7803).